Reading from the N-terminus, the 351-residue chain is Putative ABC transporter permease protein MJ0876 (351 aa).

9 consecutive transmembrane segments (helical) span residues 4-24 (VGIL…ALYL), 59-79 (LPPI…GLML), 99-119 (VLMV…FEIF), 124-144 (ILVA…IIAL), 152-172 (VIIV…YLIA), 196-216 (GDVI…MFLI), 249-269 (FITG…IIAP), 284-304 (LVPA…ILSL), and 322-342 (PLPI…YLVY).

This sequence belongs to the binding-protein-dependent transport system permease family. FecCD subfamily.

Its subcellular location is the cell membrane. Probably part of a binding-protein-dependent transport system. Probably responsible for the translocation of the substrate across the membrane. The sequence is that of Putative ABC transporter permease protein MJ0876 from Methanocaldococcus jannaschii (strain ATCC 43067 / DSM 2661 / JAL-1 / JCM 10045 / NBRC 100440) (Methanococcus jannaschii).